The following is a 396-amino-acid chain: Elongation factor Tu 2 (396 aa).

The region spanning 10 to 206 (KLHVNVGTIG…ALDTFIPDPT (197 aa)) is the tr-type G domain. Positions 19–26 (GHVDHGKT) are G1. 19 to 26 (GHVDHGKT) contributes to the GTP binding site. Residue Thr-26 participates in Mg(2+) binding. A G2 region spans residues 60–64 (GITIS). Positions 81 to 84 (DCPG) are G3. GTP contacts are provided by residues 81–85 (DCPGH) and 136–139 (NKAD). Positions 136-139 (NKAD) are G4. Positions 174 to 176 (SAR) are G5.

It belongs to the TRAFAC class translation factor GTPase superfamily. Classic translation factor GTPase family. EF-Tu/EF-1A subfamily. In terms of assembly, monomer.

It localises to the cytoplasm. The catalysed reaction is GTP + H2O = GDP + phosphate + H(+). In terms of biological role, GTP hydrolase that promotes the GTP-dependent binding of aminoacyl-tRNA to the A-site of ribosomes during protein biosynthesis. The protein is Elongation factor Tu 2 of Xanthomonas campestris pv. campestris (strain 8004).